A 288-amino-acid polypeptide reads, in one-letter code: 33 kDa chaperonin (288 aa).

Disulfide bonds link Cys-233–Cys-235 and Cys-267–Cys-270.

The protein belongs to the HSP33 family. In terms of processing, under oxidizing conditions two disulfide bonds are formed involving the reactive cysteines. Under reducing conditions zinc is bound to the reactive cysteines and the protein is inactive.

The protein localises to the cytoplasm. In terms of biological role, redox regulated molecular chaperone. Protects both thermally unfolding and oxidatively damaged proteins from irreversible aggregation. Plays an important role in the bacterial defense system toward oxidative stress. In Pasteurella multocida (strain Pm70), this protein is 33 kDa chaperonin.